The primary structure comprises 448 residues: Probable glycine dehydrogenase (decarboxylating) subunit 1 (448 aa).

Belongs to the GcvP family. N-terminal subunit subfamily. In terms of assembly, the glycine cleavage system is composed of four proteins: P, T, L and H. In this organism, the P 'protein' is a heterodimer of two subunits.

The catalysed reaction is N(6)-[(R)-lipoyl]-L-lysyl-[glycine-cleavage complex H protein] + glycine + H(+) = N(6)-[(R)-S(8)-aminomethyldihydrolipoyl]-L-lysyl-[glycine-cleavage complex H protein] + CO2. Functionally, the glycine cleavage system catalyzes the degradation of glycine. The P protein binds the alpha-amino group of glycine through its pyridoxal phosphate cofactor; CO(2) is released and the remaining methylamine moiety is then transferred to the lipoamide cofactor of the H protein. The polypeptide is Probable glycine dehydrogenase (decarboxylating) subunit 1 (Listeria innocua serovar 6a (strain ATCC BAA-680 / CLIP 11262)).